Here is a 1199-residue protein sequence, read N- to C-terminus: DNA-directed RNA polymerase subunit beta' (1199 aa).

Zn(2+) is bound by residues cysteine 60, cysteine 62, cysteine 75, and cysteine 78. Positions 449, 451, and 453 each coordinate Mg(2+). Zn(2+)-binding residues include cysteine 818, cysteine 892, cysteine 899, and cysteine 902.

This sequence belongs to the RNA polymerase beta' chain family. As to quaternary structure, the RNAP catalytic core consists of 2 alpha, 1 beta, 1 beta' and 1 omega subunit. When a sigma factor is associated with the core the holoenzyme is formed, which can initiate transcription. Requires Mg(2+) as cofactor. It depends on Zn(2+) as a cofactor.

It carries out the reaction RNA(n) + a ribonucleoside 5'-triphosphate = RNA(n+1) + diphosphate. In terms of biological role, DNA-dependent RNA polymerase catalyzes the transcription of DNA into RNA using the four ribonucleoside triphosphates as substrates. In Bacillus velezensis (strain DSM 23117 / BGSC 10A6 / LMG 26770 / FZB42) (Bacillus amyloliquefaciens subsp. plantarum), this protein is DNA-directed RNA polymerase subunit beta'.